We begin with the raw amino-acid sequence, 467 residues long: Glutamate--tRNA ligase (467 aa).

Residues 13–23 (PSPTGFLHLGG) carry the 'HIGH' region motif. Basic and acidic residues predominate over residues 118–133 (ARGDKPRYDGTWRPEP). A disordered region spans residues 118 to 141 (ARGDKPRYDGTWRPEPGKTLPAIP). The short motif at 245-249 (KLSKR) is the 'KMSKS' region element. K248 serves as a coordination point for ATP.

It belongs to the class-I aminoacyl-tRNA synthetase family. Glutamate--tRNA ligase type 1 subfamily. Monomer.

It is found in the cytoplasm. It catalyses the reaction tRNA(Glu) + L-glutamate + ATP = L-glutamyl-tRNA(Glu) + AMP + diphosphate. Its function is as follows. Catalyzes the attachment of glutamate to tRNA(Glu) in a two-step reaction: glutamate is first activated by ATP to form Glu-AMP and then transferred to the acceptor end of tRNA(Glu). This Bordetella avium (strain 197N) protein is Glutamate--tRNA ligase.